The primary structure comprises 252 residues: Aquaporin TIP1-2 (252 aa).

Over 1-23 (MPIGSIAIGAPGEASHPDTIKAS) the chain is Cytoplasmic. A helical membrane pass occupies residues 24-44 (LAEFISTLIFVFAGEGSGMAF). Residues 45 to 55 (NKLTNDGSTTP) lie on the Vacuolar side of the membrane. Residues 56 to 76 (AGLVAASLAHGFALFVAVSVG) form a helical membrane-spanning segment. Over 77–103 (ANISGGHVNPAVTFGAFLGGNISLIRG) the chain is Cytoplasmic. Positions 85-87 (NPA) match the NPA 1 motif. A helical membrane pass occupies residues 104–124 (ILYWIAQLLGSVVACLLLKLA). Residues 125–143 (TGGLETSAFSLSSDVSVWN) are Vacuolar-facing. A helical transmembrane segment spans residues 144 to 164 (AVVFEIVMTFGLVYTVYATAV). The Cytoplasmic portion of the chain corresponds to 165-172 (DPRKGDLG). The chain crosses the membrane as a helical span at residues 173 to 193 (VIAPIAIGFIVGANILAGGAF). Over 194–219 (DGASMNPAVSFGPAVVSWTWDNHWVY) the chain is Vacuolar. The short motif at 199–201 (NPA) is the NPA 2 element. Residues 220–240 (WVGPLIGAAIAALVYDGVFIG) form a helical membrane-spanning segment. Over 241–252 (QATHEQLPPSDY) the chain is Cytoplasmic.

It belongs to the MIP/aquaporin (TC 1.A.8) family. TIP (TC 1.A.8.10) subfamily. In terms of tissue distribution, mainly expressed in fruits and leaves, and, to a lower extent, in roots, stems and flowers.

Its subcellular location is the vacuole membrane. Water channel required to facilitate the transport of water from the vacuolar compartment to the cytoplasm. The sequence is that of Aquaporin TIP1-2 from Musa acuminata (Banana).